We begin with the raw amino-acid sequence, 460 residues long: Cobyrinate a,c-diamide synthase (460 aa).

A GATase cobBQ-type domain is found at 248–440; sequence KIAVARDAAF…THFHFGSSTK (193 aa). The active-site Nucleophile is C331.

It belongs to the CobB/CbiA family. Requires Mg(2+) as cofactor.

The catalysed reaction is cob(II)yrinate + 2 L-glutamine + 2 ATP + 2 H2O = cob(II)yrinate a,c diamide + 2 L-glutamate + 2 ADP + 2 phosphate + 2 H(+). The protein operates within cofactor biosynthesis; adenosylcobalamin biosynthesis; cob(II)yrinate a,c-diamide from sirohydrochlorin (anaerobic route): step 10/10. Functionally, catalyzes the ATP-dependent amidation of the two carboxylate groups at positions a and c of cobyrinate, using either L-glutamine or ammonia as the nitrogen source. In Priestia megaterium (Bacillus megaterium), this protein is Cobyrinate a,c-diamide synthase.